The following is a 233-amino-acid chain: Protein YIPF6 (233 aa).

Over 1–84 (MAETEGFGDS…PKKSTTLLRD (84 aa)) the chain is Cytoplasmic. Residues 85–105 (WDLWGPLVLCVSLALMLQGGN) form a helical membrane-spanning segment. At 106-111 (ADSKDD) the chain is on the lumenal side. Residues 112–132 (GGPQFAEVFVIIWFGAVVITL) form a helical membrane-spanning segment. Topologically, residues 133–142 (NSKLLGGTIS) are cytoplasmic. The helical transmembrane segment at 143-163 (FFQSLCVLGYCILPLTVAMLV) threads the bilayer. Topologically, residues 164-180 (CRLVLLLSHTTASFIVR) are lumenal. A helical membrane pass occupies residues 181-201 (LVVVTVMFAWSTFASTAFLAD). Residues 202–208 (SQPPNRR) are Cytoplasmic-facing. The helical transmembrane segment at 209 to 229 (ALAVYPIFLFYFVISWMVLTF) threads the bilayer. Residues 230-233 (NTVS) lie on the Lumenal side of the membrane.

Belongs to the YIP1 family.

It localises to the golgi apparatus membrane. The protein is Protein YIPF6 (yipf6) of Xenopus tropicalis (Western clawed frog).